Reading from the N-terminus, the 346-residue chain is Holliday junction branch migration complex subunit RuvB (346 aa).

Residues 1–16 (MSDADRLITPEKRGED) show a composition bias toward basic and acidic residues. The tract at residues 1-23 (MSDADRLITPEKRGEDIDTTLRP) is disordered. The tract at residues 1-182 (MSDADRLITP…FGIPVRLAFY (182 aa)) is large ATPase domain (RuvB-L). ATP contacts are provided by residues Leu21, Arg22, Gly63, Lys66, Thr67, Thr68, 129–131 (EDF), Arg172, Tyr182, and Arg219. Residue Thr67 participates in Mg(2+) binding. The small ATPAse domain (RuvB-S) stretch occupies residues 183–253 (TVDELELIVR…IADEALTRLL (71 aa)). The segment at 256–346 (NMGLDQLDMR…AQFRLTLEDD (91 aa)) is head domain (RuvB-H). Residues Arg292, Arg311, and Arg316 each coordinate DNA.

This sequence belongs to the RuvB family. Homohexamer. Forms an RuvA(8)-RuvB(12)-Holliday junction (HJ) complex. HJ DNA is sandwiched between 2 RuvA tetramers; dsDNA enters through RuvA and exits via RuvB. An RuvB hexamer assembles on each DNA strand where it exits the tetramer. Each RuvB hexamer is contacted by two RuvA subunits (via domain III) on 2 adjacent RuvB subunits; this complex drives branch migration. In the full resolvosome a probable DNA-RuvA(4)-RuvB(12)-RuvC(2) complex forms which resolves the HJ.

It is found in the cytoplasm. The enzyme catalyses ATP + H2O = ADP + phosphate + H(+). In terms of biological role, the RuvA-RuvB-RuvC complex processes Holliday junction (HJ) DNA during genetic recombination and DNA repair, while the RuvA-RuvB complex plays an important role in the rescue of blocked DNA replication forks via replication fork reversal (RFR). RuvA specifically binds to HJ cruciform DNA, conferring on it an open structure. The RuvB hexamer acts as an ATP-dependent pump, pulling dsDNA into and through the RuvAB complex. RuvB forms 2 homohexamers on either side of HJ DNA bound by 1 or 2 RuvA tetramers; 4 subunits per hexamer contact DNA at a time. Coordinated motions by a converter formed by DNA-disengaged RuvB subunits stimulates ATP hydrolysis and nucleotide exchange. Immobilization of the converter enables RuvB to convert the ATP-contained energy into a lever motion, pulling 2 nucleotides of DNA out of the RuvA tetramer per ATP hydrolyzed, thus driving DNA branch migration. The RuvB motors rotate together with the DNA substrate, which together with the progressing nucleotide cycle form the mechanistic basis for DNA recombination by continuous HJ branch migration. Branch migration allows RuvC to scan DNA until it finds its consensus sequence, where it cleaves and resolves cruciform DNA. The sequence is that of Holliday junction branch migration complex subunit RuvB from Agrobacterium fabrum (strain C58 / ATCC 33970) (Agrobacterium tumefaciens (strain C58)).